The primary structure comprises 748 residues: Formate acetyltransferase (748 aa).

A PFL domain is found at Asn-5 to Lys-618. Cys-412 (S-acetylcysteine intermediate) is an active-site residue. The Cysteine radical intermediate role is filled by Cys-413. Positions Pro-625–Met-748 constitute a Glycine radical domain. Gly-723 carries the glycine radical modification.

This sequence belongs to the glycyl radical enzyme (GRE) family. PFL subfamily. In terms of assembly, homodimer.

It is found in the cytoplasm. It catalyses the reaction formate + acetyl-CoA = pyruvate + CoA. It functions in the pathway fermentation; pyruvate fermentation; formate from pyruvate: step 1/1. Functionally, catalyzes the conversion of pyruvate to formate and acetyl-CoA. This Staphylococcus epidermidis (strain ATCC 12228 / FDA PCI 1200) protein is Formate acetyltransferase (pflB).